Here is a 347-residue protein sequence, read N- to C-terminus: N-acetyl-gamma-glutamyl-phosphate reductase (347 aa).

C150 is an active-site residue.

This sequence belongs to the NAGSA dehydrogenase family. Type 1 subfamily.

The protein localises to the cytoplasm. The catalysed reaction is N-acetyl-L-glutamate 5-semialdehyde + phosphate + NADP(+) = N-acetyl-L-glutamyl 5-phosphate + NADPH + H(+). It participates in amino-acid biosynthesis; L-arginine biosynthesis; N(2)-acetyl-L-ornithine from L-glutamate: step 3/4. Its function is as follows. Catalyzes the NADPH-dependent reduction of N-acetyl-5-glutamyl phosphate to yield N-acetyl-L-glutamate 5-semialdehyde. This is N-acetyl-gamma-glutamyl-phosphate reductase from Halothermothrix orenii (strain H 168 / OCM 544 / DSM 9562).